We begin with the raw amino-acid sequence, 95 residues long: Aspartyl/glutamyl-tRNA(Asn/Gln) amidotransferase subunit C (95 aa).

It belongs to the GatC family. In terms of assembly, heterotrimer of A, B and C subunits.

The enzyme catalyses L-glutamyl-tRNA(Gln) + L-glutamine + ATP + H2O = L-glutaminyl-tRNA(Gln) + L-glutamate + ADP + phosphate + H(+). It carries out the reaction L-aspartyl-tRNA(Asn) + L-glutamine + ATP + H2O = L-asparaginyl-tRNA(Asn) + L-glutamate + ADP + phosphate + 2 H(+). Its function is as follows. Allows the formation of correctly charged Asn-tRNA(Asn) or Gln-tRNA(Gln) through the transamidation of misacylated Asp-tRNA(Asn) or Glu-tRNA(Gln) in organisms which lack either or both of asparaginyl-tRNA or glutaminyl-tRNA synthetases. The reaction takes place in the presence of glutamine and ATP through an activated phospho-Asp-tRNA(Asn) or phospho-Glu-tRNA(Gln). This chain is Aspartyl/glutamyl-tRNA(Asn/Gln) amidotransferase subunit C, found in Cytophaga hutchinsonii (strain ATCC 33406 / DSM 1761 / CIP 103989 / NBRC 15051 / NCIMB 9469 / D465).